The primary structure comprises 136 residues: Protein NrdI (136 aa).

The protein belongs to the NrdI family.

Probably involved in ribonucleotide reductase function. This is Protein NrdI from Salmonella agona (strain SL483).